A 490-amino-acid chain; its full sequence is uncharacterized protein (490 aa).

The N-terminal stretch at 1-19 is a signal peptide; sequence MSITSVSLYVYLICAGGHA.

It belongs to the mimivirus L137 family.

This is an uncharacterized protein from Acanthamoeba polyphaga (Amoeba).